Consider the following 236-residue polypeptide: Phosphoribosylformylglycinamidine synthase subunit PurQ (236 aa).

The 232-residue stretch at 3–234 (FGVIVFPGSN…VDWWERGERL (232 aa)) folds into the Glutamine amidotransferase type-1 domain. The active-site Nucleophile is C86. Catalysis depends on residues H203 and E205.

As to quaternary structure, part of the FGAM synthase complex composed of 1 PurL, 1 PurQ and 2 PurS subunits.

It localises to the cytoplasm. The enzyme catalyses N(2)-formyl-N(1)-(5-phospho-beta-D-ribosyl)glycinamide + L-glutamine + ATP + H2O = 2-formamido-N(1)-(5-O-phospho-beta-D-ribosyl)acetamidine + L-glutamate + ADP + phosphate + H(+). It catalyses the reaction L-glutamine + H2O = L-glutamate + NH4(+). It participates in purine metabolism; IMP biosynthesis via de novo pathway; 5-amino-1-(5-phospho-D-ribosyl)imidazole from N(2)-formyl-N(1)-(5-phospho-D-ribosyl)glycinamide: step 1/2. Functionally, part of the phosphoribosylformylglycinamidine synthase complex involved in the purines biosynthetic pathway. Catalyzes the ATP-dependent conversion of formylglycinamide ribonucleotide (FGAR) and glutamine to yield formylglycinamidine ribonucleotide (FGAM) and glutamate. The FGAM synthase complex is composed of three subunits. PurQ produces an ammonia molecule by converting glutamine to glutamate. PurL transfers the ammonia molecule to FGAR to form FGAM in an ATP-dependent manner. PurS interacts with PurQ and PurL and is thought to assist in the transfer of the ammonia molecule from PurQ to PurL. This Moorella thermoacetica (strain ATCC 39073 / JCM 9320) protein is Phosphoribosylformylglycinamidine synthase subunit PurQ.